The following is a 249-amino-acid chain: Ubiquinone biosynthesis O-methyltransferase (249 aa).

Arg-41, Gly-72, Asp-93, and Met-136 together coordinate S-adenosyl-L-methionine.

The protein belongs to the methyltransferase superfamily. UbiG/COQ3 family.

The catalysed reaction is a 3-demethylubiquinol + S-adenosyl-L-methionine = a ubiquinol + S-adenosyl-L-homocysteine + H(+). It carries out the reaction a 3-(all-trans-polyprenyl)benzene-1,2-diol + S-adenosyl-L-methionine = a 2-methoxy-6-(all-trans-polyprenyl)phenol + S-adenosyl-L-homocysteine + H(+). It functions in the pathway cofactor biosynthesis; ubiquinone biosynthesis. Functionally, O-methyltransferase that catalyzes the 2 O-methylation steps in the ubiquinone biosynthetic pathway. This is Ubiquinone biosynthesis O-methyltransferase from Methylobacterium sp. (strain 4-46).